The sequence spans 1146 residues: Probable phospholipid-transporting ATPase IIB (1146 aa).

Residues M1–T143 are Cytoplasmic-facing. Residues F144–V164 form a helical membrane-spanning segment. Residues S165–A172 lie on the Extracellular side of the membrane. The chain crosses the membrane as a helical span at residues L173–I193. Topologically, residues A194–K381 are cytoplasmic. The helical transmembrane segment at A382–G402 threads the bilayer. Residues P403–N407 lie on the Extracellular side of the membrane. The chain crosses the membrane as a helical span at residues L408–L427. Residues D428–G938 lie on the Cytoplasmic side of the membrane. Residue D467 is the 4-aspartylphosphate intermediate of the active site. Positions 467, 468, and 469 each coordinate ATP. D467 provides a ligand contact to Mg(2+). T469 is a binding site for Mg(2+). Positions V508 to S519 are enriched in polar residues. Residues V508–S535 form a disordered region. ATP contacts are provided by E590, F632, K637, K656, R685, T686, T765, G766, D767, R847, and K853. D873 is a Mg(2+) binding site. The ATP site is built by N876 and D877. D877 provides a ligand contact to Mg(2+). A helical membrane pass occupies residues L939–L959. The Extracellular segment spans residues Y960 to Q961. The helical transmembrane segment at G962–L982 threads the bilayer. The Cytoplasmic segment spans residues D983–T1011. Residues F1012–L1032 form a helical membrane-spanning segment. Residues L1033–H1040 lie on the Extracellular side of the membrane. Residues V1041 to I1061 form a helical membrane-spanning segment. Topologically, residues R1062–H1065 are cytoplasmic. A helical transmembrane segment spans residues W1066–L1086. The Extracellular portion of the chain corresponds to N1087–F1105. The helical transmembrane segment at I1106–V1128 threads the bilayer. The Cytoplasmic portion of the chain corresponds to L1129–S1146.

It belongs to the cation transport ATPase (P-type) (TC 3.A.3) family. Type IV subfamily. The cofactor is Mg(2+). In terms of tissue distribution, found in most tissues except spleen and muscle. Most abundant in testis. Also detected in fetal tissues.

It is found in the golgi apparatus. The protein resides in the trans-Golgi network membrane. It carries out the reaction ATP + H2O + phospholipidSide 1 = ADP + phosphate + phospholipidSide 2.. This is Probable phospholipid-transporting ATPase IIB (Atp9b) from Mus musculus (Mouse).